We begin with the raw amino-acid sequence, 149 residues long: Large ribosomal subunit protein bL9 (149 aa).

The protein belongs to the bacterial ribosomal protein bL9 family.

Functionally, binds to the 23S rRNA. In Legionella pneumophila (strain Lens), this protein is Large ribosomal subunit protein bL9.